A 323-amino-acid polypeptide reads, in one-letter code: uncharacterized protein (323 aa).

This sequence belongs to the glycosyltransferase 2 family.

This is an uncharacterized protein from Haemophilus influenzae (strain ATCC 51907 / DSM 11121 / KW20 / Rd).